We begin with the raw amino-acid sequence, 320 residues long: Cytochrome f (320 aa).

A signal peptide spans 1 to 35; sequence MQNRNFNNLIIKWAIRLISIMIIINTIFWSSISEA. Positions 36, 56, 59, and 60 each coordinate heme. The helical transmembrane segment at 286–305 threads the bilayer; that stretch reads IQGLLLFFGSVILAQIFLVL.

The protein belongs to the cytochrome f family. The 4 large subunits of the cytochrome b6-f complex are cytochrome b6, subunit IV (17 kDa polypeptide, petD), cytochrome f and the Rieske protein, while the 4 small subunits are PetG, PetL, PetM and PetN. The complex functions as a dimer. Requires heme as cofactor.

The protein localises to the plastid. It is found in the chloroplast thylakoid membrane. Functionally, component of the cytochrome b6-f complex, which mediates electron transfer between photosystem II (PSII) and photosystem I (PSI), cyclic electron flow around PSI, and state transitions. The sequence is that of Cytochrome f (petA) from Marchantia polymorpha (Common liverwort).